Here is a 196-residue protein sequence, read N- to C-terminus: 3-dehydroquinate dehydratase (196 aa).

3-dehydroquinate contacts are provided by residues 23-25 (ELR) and Arg45. His98 acts as the Proton donor/acceptor in catalysis. Lys122 functions as the Schiff-base intermediate with substrate in the catalytic mechanism. The 3-dehydroquinate site is built by Arg159 and Gln182.

It belongs to the type-I 3-dehydroquinase family. Homodimer.

It carries out the reaction 3-dehydroquinate = 3-dehydroshikimate + H2O. The protein operates within metabolic intermediate biosynthesis; chorismate biosynthesis; chorismate from D-erythrose 4-phosphate and phosphoenolpyruvate: step 3/7. Its function is as follows. Involved in the third step of the chorismate pathway, which leads to the biosynthesis of aromatic amino acids. Catalyzes the cis-dehydration of 3-dehydroquinate (DHQ) and introduces the first double bond of the aromatic ring to yield 3-dehydroshikimate. The protein is 3-dehydroquinate dehydratase of Archaeoglobus fulgidus (strain ATCC 49558 / DSM 4304 / JCM 9628 / NBRC 100126 / VC-16).